A 225-amino-acid polypeptide reads, in one-letter code: MAIKDWPEGEAPREKLLSQGVKQLSDAELLAVLLRVGLKGLSAVELARIMINEFGGLRSLLNASQAQVCRLDGIGPVKFAQMQAAVELGARISQENLKRGKILSDPDLTRDYLMRQLSDRAYEVFAILLLDSQHRVIQFVELFRGTINSASVYPREVVSLVLEKKAAAVIVCHNHPSGIAEPSTADRRITERLKQALQTIDVSLLDHMVVGDREIVSFAERGWID.

The MPN domain occupies 102–224; the sequence is ILSDPDLTRD…IVSFAERGWI (123 aa). His173, His175, and Asp186 together coordinate Zn(2+). The JAMM motif motif lies at 173–186; the sequence is HNHPSGIAEPSTAD.

This sequence belongs to the UPF0758 family.

The chain is UPF0758 protein Spea_3837 from Shewanella pealeana (strain ATCC 700345 / ANG-SQ1).